The primary structure comprises 95 residues: DNA-directed RNA polymerase subunit Rpo6 (95 aa).

This sequence belongs to the archaeal Rpo6/eukaryotic RPB6 RNA polymerase subunit family. Part of the RNA polymerase complex.

Its subcellular location is the cytoplasm. The enzyme catalyses RNA(n) + a ribonucleoside 5'-triphosphate = RNA(n+1) + diphosphate. Functionally, DNA-dependent RNA polymerase (RNAP) catalyzes the transcription of DNA into RNA using the four ribonucleoside triphosphates as substrates. The polypeptide is DNA-directed RNA polymerase subunit Rpo6 (Saccharolobus islandicus (strain M.16.27) (Sulfolobus islandicus)).